We begin with the raw amino-acid sequence, 341 residues long: 5-formaminoimidazole-4-carboxamide-1-(beta)-D-ribofuranosyl 5'-monophosphate synthetase (341 aa).

The 5-amino-1-(5-phospho-beta-D-ribosyl)imidazole-4-carboxamide site is built by His27 and Ser92. Residues 113-328 form the ATP-grasp domain; the sequence is RELLRWEADQ…MGERIAHEIK (216 aa). ATP contacts are provided by residues 143-195 and Glu217; that span reads AEEV…VPAY. Asn237 contacts 5-amino-1-(5-phospho-beta-D-ribosyl)imidazole-4-carboxamide. 2 residues coordinate Mg(2+): Glu276 and Glu289.

The protein belongs to the phosphohexose mutase family. It depends on Mg(2+) as a cofactor. Requires Mn(2+) as cofactor.

The enzyme catalyses 5-amino-1-(5-phospho-beta-D-ribosyl)imidazole-4-carboxamide + formate + ATP = 5-formamido-1-(5-phospho-D-ribosyl)imidazole-4-carboxamide + ADP + phosphate. The protein operates within purine metabolism; IMP biosynthesis via de novo pathway; 5-formamido-1-(5-phospho-D-ribosyl)imidazole-4-carboxamide from 5-amino-1-(5-phospho-D-ribosyl)imidazole-4-carboxamide (formate route): step 1/1. Catalyzes the ATP- and formate-dependent formylation of 5-aminoimidazole-4-carboxamide-1-beta-d-ribofuranosyl 5'-monophosphate (AICAR) to 5-formaminoimidazole-4-carboxamide-1-beta-d-ribofuranosyl 5'-monophosphate (FAICAR) in the absence of folates. This chain is 5-formaminoimidazole-4-carboxamide-1-(beta)-D-ribofuranosyl 5'-monophosphate synthetase, found in Pyrobaculum aerophilum (strain ATCC 51768 / DSM 7523 / JCM 9630 / CIP 104966 / NBRC 100827 / IM2).